The primary structure comprises 113 residues: Ribonuclease P protein component (113 aa).

This sequence belongs to the RnpA family. As to quaternary structure, consists of a catalytic RNA component (M1 or rnpB) and a protein subunit.

The catalysed reaction is Endonucleolytic cleavage of RNA, removing 5'-extranucleotides from tRNA precursor.. Functionally, RNaseP catalyzes the removal of the 5'-leader sequence from pre-tRNA to produce the mature 5'-terminus. It can also cleave other RNA substrates such as 4.5S RNA. The protein component plays an auxiliary but essential role in vivo by binding to the 5'-leader sequence and broadening the substrate specificity of the ribozyme. The sequence is that of Ribonuclease P protein component from Finegoldia magna (strain ATCC 29328 / DSM 20472 / WAL 2508) (Peptostreptococcus magnus).